Here is a 376-residue protein sequence, read N- to C-terminus: MVSWKGIYFILFLFAGSFFGSIFMLGPILPLMFINLSWYRWISSRLVATWLTLPVALLETMFGVRVVITGDAFVPGERSVIIMNHRTRVDWMFLWNCLMRYSYLRVEKICLKSSLKSVPGFGWAMQVAAFIFIHRKWKDDKSHFEDMIDYFCAIHEPLQLLIFPEGTDLTENNKARSNDFAEKNGLQKYEYVLHPRTTGFTFVVDRLREGKNLDAVHDITVAYPYNIPQTEKHLLLGDFPKEIHFHVQRYPADSLPTSKEDLQLWCHRRWEEKEERLRSFYQGEKNFHFTGQSTVPPCKSELRVLVVKLLSIVYWALFCSAMCLLIYLYSPVRWYFIISIVFFVLQERIFGGLEIIELACYRFLHKHPHLNSKKNE.

A helical transmembrane segment spans residues 9-29; the sequence is FILFLFAGSFFGSIFMLGPIL. N-linked (GlcNAc...) asparagine glycosylation is present at N35. A helical membrane pass occupies residues 48-68; sequence ATWLTLPVALLETMFGVRVVI. The short motif at 85–90 is the HXXXXD motif element; the sequence is HRTRVD. K183 carries the post-translational modification N6-acetyllysine. Transmembrane regions (helical) follow at residues 309 to 329 and 336 to 356; these read LLSI…IYLY and FIIS…LEII.

This sequence belongs to the 1-acyl-sn-glycerol-3-phosphate acyltransferase family. As to expression, widely expressed with highest expression in heart, liver and 12.5 dpc aorta-gonad-mesonephros and lower levels in the 16 dpc fetal liver and adult bone marrow. In bone marrow, highest levels are found in B-cells compared with whole bone marrow, T-cells, erythrocytes, and granulocytes.

Its subcellular location is the endoplasmic reticulum membrane. The enzyme catalyses a 1-acyl-sn-glycero-3-phosphate + an acyl-CoA = a 1,2-diacyl-sn-glycero-3-phosphate + CoA. It catalyses the reaction a 1-acyl-sn-glycero-3-phospho-(1D-myo-inositol) + an acyl-CoA = a 1,2-diacyl-sn-glycero-3-phospho-(1D-myo-inositol) + CoA. It carries out the reaction 1-acyl-sn-glycero-3-phospho-(1'-sn-glycerol) + an acyl-CoA = a 1,2-diacyl-sn-glycero-3-phospho-(1'-sn-glycerol) + CoA. The catalysed reaction is 1-hexadecanoyl-sn-glycero-3-phosphate + (9Z)-octadecenoyl-CoA = 1-hexadecanoyl-2-(9Z-octadecenoyl)-sn-glycero-3-phosphate + CoA. The enzyme catalyses 1-(9Z-octadecenoyl)-sn-glycero-3-phosphate + (9Z)-octadecenoyl-CoA = 1,2-di-(9Z-octadecenoyl)-sn-glycero-3-phosphate + CoA. It catalyses the reaction 1-(9Z,12Z)-octadecadienoyl-sn-glycero-3-phosphate + (9Z)-octadecenoyl-CoA = 1-(9Z,12Z)-octadecadienoyl-2-(9Z)-octadecenoyl-sn-glycero-3-phosphate + CoA. It carries out the reaction 1-(9Z,12Z,15Z)-octadecatrienoyl-sn-glycero-3-phosphate + (9Z)-octadecenoyl-CoA = 1-(9Z,12Z,15Z)-octadecatrienoyl-2-(9Z)-octadecenoyl-sn-glycero-3-phosphate + CoA. The catalysed reaction is 1-(9Z-octadecenoyl)-sn-glycero-3-phosphate + hexadecanoyl-CoA = 1-(9Z)-octadecenoyl-2-hexadecanoyl-sn-glycero-3-phosphate + CoA. The enzyme catalyses 1-(9Z-octadecenoyl)-sn-glycero-3-phosphate + octadecanoyl-CoA = 1-(9Z-octadecenoyl)-2-octadecanoyl-sn-glycero-3-phosphate + CoA. It catalyses the reaction 1-acyl-sn-glycero-3-phospho-(1'-sn-glycerol) + (9Z)-octadecenoyl-CoA = 1-acyl-2-(9Z-octadecenoyl)-sn-glycero-3-phospho-(1'-sn-glycerol) + CoA. It carries out the reaction a 1-acyl-sn-glycero-3-phospho-(1D-myo-inositol) + (9Z)-octadecenoyl-CoA = a 1-acyl-2-(9Z-octadecenoyl)-sn-glycero-3-phospho-(1D-myo-inositol) + CoA. The catalysed reaction is 1-hexadecanoyl-sn-glycero-3-phospho-(1D-myo-inositol) + hexadecanoyl-CoA = 1,2-dihexadecanoyl-sn-glycero-3-phospho-(1D-myo-inositol) + CoA. The enzyme catalyses 1-hexadecanoyl-sn-glycero-3-phospho-(1D-myo-inositol) + octadecanoyl-CoA = 1-hexadecanoyl-2-octadecanoyl-sn-glycero-3-phospho-(1D-myo-inositol) + CoA. It catalyses the reaction 1-hexadecanoyl-sn-glycero-3-phospho-(1D-myo-inositol) + (9Z)-octadecenoyl-CoA = 1-hexadecanoyl-2-(9Z-octadecenoyl)-sn-glycero-3-phospho-(1D-myo-inositol) + CoA. It carries out the reaction 1-hexadecanoyl-sn-glycero-3-phospho-(1D-myo-inositol) + (9Z,12Z)-octadecadienoyl-CoA = 1-hexadecanoyl-2-(9Z,12Z-octadecadienoyl)-sn-glycero-3-phospho-(1D-myo-inositol) + CoA. The catalysed reaction is 1-hexadecanoyl-sn-glycero-3-phospho-(1D-myo-inositol) + (5Z,8Z,11Z,14Z)-eicosatetraenoyl-CoA = 1-hexadecanoyl-2-(5Z,8Z,11Z,14Z-eicosatetraenoyl)-sn-glycero-3-phospho-D-myo-inositol + CoA. The enzyme catalyses 1-hexadecanoyl-sn-glycero-3-phospho-(1'-sn-glycerol) + hexadecanoyl-CoA = 1,2-dihexadecanoyl-sn-glycero-3-phospho-(1'-sn-glycerol) + CoA. It catalyses the reaction 1-hexadecanoyl-sn-glycero-3-phospho-(1'-sn-glycerol) + octadecanoyl-CoA = 1-hexadecanoyl-2-octadecanoyl-sn-glycero-3-phospho-(1'-sn-glycerol) + CoA. It carries out the reaction 1-hexadecanoyl-sn-glycero-3-phospho-(1'-sn-glycerol) + (9Z)-octadecenoyl-CoA = 1-hexadecanoyl-2-(9Z-octadecenoyl)-sn-glycero-3-phospho-(1'-sn-glycerol) + CoA. The catalysed reaction is 1-hexadecanoyl-sn-glycero-3-phospho-(1'-sn-glycerol) + (9Z,12Z)-octadecadienoyl-CoA = 1-hexadecanoyl-2-(9Z,12Z-octadecadienoyl)-sn-glycero-3-phospho-(1'-sn-glycerol) + CoA. The enzyme catalyses 1-tetradecanoyl-sn-glycero-3-phospho-(1'-sn-glycerol) + (9Z)-octadecenoyl-CoA = 1-tetradecanoyl-2-(9Z-octadecenoyl)-sn-glycero-3-phospho-(1'-sn-glycerol) + CoA. It catalyses the reaction 1-octadecanoyl-sn-glycero-3-phospho-(1'-sn-glycerol) + (9Z)-octadecenoyl-CoA = 1-octadecanoyl-2-(9Z-octadecenoyl)-sn-glycero-3-phospho-(1'-sn-glycerol) + CoA. It carries out the reaction 1-(9Z-octadecenoyl)-sn-glycero-3-phospho-(1'-sn-glycerol) + (9Z)-octadecenoyl-CoA = 1,2-di-(9Z-octadecenoyl)-sn-glycero-3-phospho-(1'-sn-glycerol) + CoA. The catalysed reaction is 1-hexadecanoyl-sn-glycero-3-phospho-(1D-myo-inositol) + dodecanoyl-CoA = 1-hexadecanoyl-2-dodecanoyl-sn-glycero-3-phospho-(1D-myo-inositol) + CoA. The enzyme catalyses 1',3'-bis-[1-acyl-sn-glycero-3-phospho]-glycerol + (9Z)-octadecenoyl-CoA = 1'-[1-acyl-2-(9Z)-octadecenoyl-sn-glycero-3-phospho],3'-[1-acyl,2-hydroxy-sn-glycero-3-phospho]-glycerol + CoA. It catalyses the reaction 1'-[1,2-diacyl-sn-glycero-3-phospho],3'-[1-acyl-sn-glycero-3-phospho]-glycerol + (9Z)-octadecenoyl-CoA = 1'-[1,2-diacyl-sn-glycero-3-phospho],3'-[1-acyl,2-(9Z)-octadecenoyl-sn-glycero-3-phospho]-glycerol + CoA. It carries out the reaction 1'-[1,2-diacyl-sn-glycero-3-phospho],3'-[1-acyl-sn-glycero-3-phospho]-glycerol + (9Z,12Z)-octadecadienoyl-CoA = 1'-[1,2-diacyl-sn-glycero-3-phospho],3'-[1-acyl,2-(9Z,12Z)-octadecadienoyl-sn-glycero-3-phospho]-glycerol + CoA. The catalysed reaction is 1'-[1,2-diacyl-sn-glycero-3-phospho],3'-[1-acyl-sn-glycero-3-phospho]-glycerol + dodecanoyl-CoA = 1'-[1,2-diacyl-sn-glycero-3-phospho],3'-[1-acyl,2-dodecanoyl-sn-glycero-3-phospho]-glycerol + CoA. The enzyme catalyses 1',3'-bis-[1-acyl-sn-glycero-3-phospho]-glycerol + dodecanoyl-CoA = 1'-[1-acyl-2-dodecanoyl-sn-glycero-3-phospho],3'-[1-acyl,2-hydroxy-sn-glycero-3-phospho]-glycerol + CoA. It catalyses the reaction a 1-acyl-sn-glycero-3-phosphate + (9Z)-octadecenoyl-CoA = a 1-acyl-2-(9Z-octadecenoyl)-sn-glycero-3-phosphate + CoA. It carries out the reaction 1',3'-bis-[1-acyl-sn-glycero-3-phospho]-glycerol + (9Z,12Z)-octadecadienoyl-CoA = 1'-[1-acyl-2-(9Z,12Z)-octadecadienoyl-sn-glycero-3-phospho],3'-[1-acyl,2-hydroxy-sn-glycero-3-phospho]-glycerol + CoA. The catalysed reaction is 1',3'-bis-[1-acyl-sn-glycero-3-phospho]-glycerol + hexadecanoyl-CoA = 1'-[1-acyl-2-hexadecanoyl-sn-glycero-3-phospho],3'-[1-acyl,2-hydroxy-sn-glycero-3-phospho]-glycerol + CoA. The enzyme catalyses 1',3'-bis-[1-acyl-sn-glycero-3-phospho]-glycerol + octadecanoyl-CoA = 1'-[1-acyl-2-octadecanoyl-sn-glycero-3-phospho],3'-[1-acyl,2-hydroxy-sn-glycero-3-phospho]-glycerol + CoA. It catalyses the reaction 1'-[1,2-diacyl-sn-glycero-3-phospho],3'-[1-acyl-sn-glycero-3-phospho]-glycerol + octanoyl-CoA = 1'-[1,2-diacyl-sn-glycero-3-phospho],3'-[1-acyl,2-octanoyl-sn-glycero-3-phospho]-glycerol + CoA. It carries out the reaction 1',3'-bis-[1-acyl-sn-glycero-3-phospho]-glycerol + octanoyl-CoA = 1'-[1-acyl-2-octanoyl-sn-glycero-3-phospho],3'-[1-acyl,2-hydroxy-sn-glycero-3-phospho]-glycerol + CoA. The catalysed reaction is 1'-[1,2-diacyl-sn-glycero-3-phospho],3'-[1-acyl-sn-glycero-3-phospho]-glycerol + hexadecanoyl-CoA = 1'-[1,2-diacyl-sn-glycero-3-phospho],3'-[1-acyl,2-hexadecanoyl-sn-glycero-3-phospho]-glycerol + CoA. The enzyme catalyses 1'-[1,2-diacyl-sn-glycero-3-phospho],3'-[1-acyl-sn-glycero-3-phospho]-glycerol + (5Z,8Z,11Z,14Z)-eicosatetraenoyl-CoA = 1'-[1,2-diacyl-sn-glycero-3-phospho],3'-[1-acyl,2-(5Z,8Z,11Z,14Z)-eicosatetraenoyl-sn-glycero-3-phospho]-glycerol + CoA. It catalyses the reaction 1',3'-bis-[1-acyl-sn-glycero-3-phospho]-glycerol + (5Z,8Z,11Z,14Z)-eicosatetraenoyl-CoA = 1'-[1-acyl-2-(5Z,8Z,11Z,14Z)-eicosatetraenoyl-sn-glycero-3-phospho],3'-[1-acyl,2-hydroxy-sn-glycero-3-phospho]-glycerol + CoA. It carries out the reaction a 1-acyl-sn-glycero-3-phospho-(1D-myo-inositol) + octadecanoyl-CoA = a 1-acyl-2-octadecanoyl-sn-glycero-3-phospho-(1D-myo-inositol) + CoA. The catalysed reaction is a 2-acyl-sn-glycero-3-phospho-D-myo-inositol + octadecanoyl-CoA = 1-octadecanoyl-2-acyl-sn-glycero-3-phospho-1D-myo-inositol + CoA. It functions in the pathway phospholipid metabolism; CDP-diacylglycerol biosynthesis; CDP-diacylglycerol from sn-glycerol 3-phosphate: step 2/3. Functionally, exhibits acyl-CoA:lysocardiolipin acyltransferase (ALCAT) activity; catalyzes the reacylation of lyso-cardiolipin to cardiolipin (CL), a key step in CL remodeling. Recognizes both monolysocardiolipin and dilysocardiolipin as substrates with a preference for linoleoyl-CoA and oleoyl-CoA as acyl donors. Also exhibits 1-acyl-sn-glycerol-3-phosphate acyltransferase activity (AGPAT) activity; converts 1-acyl-sn-glycerol-3- phosphate (lysophosphatidic acid or LPA) into 1,2-diacyl-sn-glycerol-3- phosphate (phosphatidic acid or PA) by incorporating an acyl moiety at the sn-2 position of the glycerol backbone. Possesses lysophosphatidylinositol acyltransferase (LPIAT) activity. Possesses lysophosphatidylglycerol acyltransferase (LPGAT) activity. Required for establishment of the hematopoietic and endothelial lineages. The protein is Lysocardiolipin acyltransferase 1 (Lclat1) of Mus musculus (Mouse).